The chain runs to 330 residues: Inorganic pyrophosphatase 2, mitochondrial (330 aa).

The transit peptide at 1–27 directs the protein to the mitochondrion; sequence MRALLPLLSVGRGWRVGAAARPPRRVM. Residues D159, D164, and D196 each coordinate Mg(2+). K211 carries the post-translational modification N6-succinyllysine. An N6-acetyllysine modification is found at K219. K254 is subject to N6-succinyllysine. At K256 the chain carries N6-acetyllysine.

Belongs to the PPase family. In terms of assembly, homodimer. Requires Mg(2+) as cofactor.

The protein resides in the mitochondrion. It catalyses the reaction diphosphate + H2O = 2 phosphate + H(+). Functionally, hydrolyzes inorganic pyrophosphate. This activity is essential for correct regulation of mitochondrial membrane potential, and mitochondrial organization and function. The protein is Inorganic pyrophosphatase 2, mitochondrial (Ppa2) of Mus musculus (Mouse).